The following is a 442-amino-acid chain: Mitochondrial distribution and morphology protein 12 (442 aa).

The SMP-LTD domain occupies 1-442; sequence MSIDINWEAA…VYPSFWTFLV (442 aa). 3 disordered regions span residues 67 to 125, 202 to 277, and 364 to 387; these read NDFY…RVGY, LSLA…RRMR, and EGYHDHHNHHHSGNTNTTGSRRSN. The segment covering 69-80 has biased composition (acidic residues); the sequence is FYEEDEDGEDLS. A compositionally biased stretch (polar residues) spans 90–100; that stretch reads PSSQGLSQSTP. The span at 101–112 shows a compositional bias: low complexity; the sequence is NGDAGSSNSSSN. The span at 213–222 shows a compositional bias: basic and acidic residues; sequence RQRERARSSD. Low complexity predominate over residues 227–245; sequence SPQSRSRPSTSSTRQRTST.

This sequence belongs to the MDM12 family. As to quaternary structure, component of the ER-mitochondria encounter structure (ERMES) or MDM complex, composed of MMM1, MDM10, MDM12 and MDM34. An MMM1 homodimer associates with one molecule of MDM12 on each side in a pairwise head-to-tail manner, and the SMP-LTD domains of MMM1 and MDM12 generate a continuous hydrophobic tunnel for phospholipid trafficking.

The protein localises to the mitochondrion outer membrane. The protein resides in the endoplasmic reticulum membrane. Functionally, component of the ERMES/MDM complex, which serves as a molecular tether to connect the endoplasmic reticulum (ER) and mitochondria. Components of this complex are involved in the control of mitochondrial shape and protein biogenesis, and function in nonvesicular lipid trafficking between the ER and mitochondria. MDM12 is required for the interaction of the ER-resident membrane protein MMM1 and the outer mitochondrial membrane-resident beta-barrel protein MDM10. The MDM12-MMM1 subcomplex functions in the major beta-barrel assembly pathway that is responsible for biogenesis of all mitochondrial outer membrane beta-barrel proteins, and acts in a late step after the SAM complex. The MDM10-MDM12-MMM1 subcomplex further acts in the TOM40-specific pathway after the action of the MDM12-MMM1 complex. Essential for establishing and maintaining the structure of mitochondria and maintenance of mtDNA nucleoids. The sequence is that of Mitochondrial distribution and morphology protein 12 from Arthroderma otae (strain ATCC MYA-4605 / CBS 113480) (Microsporum canis).